The following is a 327-amino-acid chain: Zinc transport protein ZntB (327 aa).

Residues 1–273 (MEAIKGSDVN…ARRTYTMSLM (273 aa)) are Cytoplasmic-facing. A helical transmembrane segment spans residues 274-294 (AMVFLPSTFLTGLFGVNLGGI). Over 295–300 (PGGGWR) the chain is Periplasmic. A helical transmembrane segment spans residues 301-321 (FGFSLFCILLVVLIGGVTLWL). The Cytoplasmic portion of the chain corresponds to 322 to 327 (HRSKWL).

This sequence belongs to the CorA metal ion transporter (MIT) (TC 1.A.35) family.

The protein localises to the cell inner membrane. The catalysed reaction is Zn(2+)(out) + H(+)(out) = Zn(2+)(in) + H(+)(in). Its function is as follows. Zinc transporter. Acts as a Zn(2+):proton symporter, which likely mediates zinc ion uptake. The protein is Zinc transport protein ZntB of Salmonella enteritidis PT4 (strain P125109).